Consider the following 100-residue polypeptide: Small ribosomal subunit protein bS20 (100 aa).

The segment covering 1-22 (MASGKPKKKNPRLASGRKRARQ) has biased composition (basic residues). Residues 1–26 (MASGKPKKKNPRLASGRKRARQGLKL) are disordered.

Belongs to the bacterial ribosomal protein bS20 family.

Binds directly to 16S ribosomal RNA. The protein is Small ribosomal subunit protein bS20 of Acidovorax ebreus (strain TPSY) (Diaphorobacter sp. (strain TPSY)).